The primary structure comprises 256 residues: 5'-nucleotidase SurE (256 aa).

Residues aspartate 9, aspartate 10, serine 42, and asparagine 99 each contribute to the a divalent metal cation site.

It belongs to the SurE nucleotidase family. The cofactor is a divalent metal cation.

The protein resides in the cytoplasm. It catalyses the reaction a ribonucleoside 5'-phosphate + H2O = a ribonucleoside + phosphate. Functionally, nucleotidase that shows phosphatase activity on nucleoside 5'-monophosphates. The sequence is that of 5'-nucleotidase SurE from Symbiobacterium thermophilum (strain DSM 24528 / JCM 14929 / IAM 14863 / T).